Here is a 95-residue protein sequence, read N- to C-terminus: Protein ECS1 (95 aa).

Positions 1–27 (MASSIVSSMFLFLLLLLVFPHIDNVLG) are cleaved as a signal peptide.

In terms of tissue distribution, expressed in leaves, flowers and stems, but not in roots.

Its subcellular location is the secreted. It localises to the cell wall. In terms of biological role, maybe involved in defense responses to X.campestris, but probably not a X.campestris pv. campestris race 750 (e.g. Xcc750) resistance gene; according to genetic data, linked to a locus influencing resistance to Xcc750. This chain is Protein ECS1, found in Arabidopsis thaliana (Mouse-ear cress).